The chain runs to 142 residues: Neuritin (142 aa).

A signal peptide spans 1–27 (MGLKLNGRYISLILAVQIAYLVQAVRA). G116 carries GPI-anchor amidated glycine lipidation. A propeptide spans 117 to 142 (AAGSLLPAFPVLLVSLSAALATWLSF) (removed in mature form).

This sequence belongs to the neuritin family. As to quaternary structure, component of the outer core of AMPAR complex. AMPAR complex consists of an inner core made of 4 pore-forming GluA/GRIA proteins (GRIA1, GRIA2, GRIA3 and GRIA4) and 4 major auxiliary subunits arranged in a twofold symmetry. One of the two pairs of distinct binding sites is occupied either by CNIH2, CNIH3 or CACNG2, CACNG3. The other harbors CACNG2, CACNG3, CACNG4, CACNG8 or GSG1L. This inner core of AMPAR complex is complemented by outer core constituents binding directly to the GluA/GRIA proteins at sites distinct from the interaction sites of the inner core constituents. Outer core constituents include at least PRRT1, PRRT2, CKAMP44/SHISA9, FRRS1L and NRN1. The proteins of the inner and outer core serve as a platform for other, more peripherally associated AMPAR constituents. Alone or in combination, these auxiliary subunits control the gating and pharmacology of the AMPAR complex and profoundly impact their biogenesis and protein processing.

It localises to the cell membrane. Its subcellular location is the synapse. In terms of biological role, promotes neurite outgrowth and especially branching of neuritic processes in primary hippocampal and cortical cells. In Homo sapiens (Human), this protein is Neuritin (NRN1).